A 336-amino-acid chain; its full sequence is Anthranilate phosphoribosyltransferase (336 aa).

5-phospho-alpha-D-ribose 1-diphosphate-binding positions include G82, 85-86 (GD), T90, 92-95 (NVST), 110-118 (KHGNRSVSS), and S122. G82 lines the anthranilate pocket. S94 lines the Mg(2+) pocket. N113 contacts anthranilate. R168 is an anthranilate binding site. Mg(2+)-binding residues include D227 and E228.

The protein belongs to the anthranilate phosphoribosyltransferase family. As to quaternary structure, homodimer. Mg(2+) is required as a cofactor.

The catalysed reaction is N-(5-phospho-beta-D-ribosyl)anthranilate + diphosphate = 5-phospho-alpha-D-ribose 1-diphosphate + anthranilate. Its pathway is amino-acid biosynthesis; L-tryptophan biosynthesis; L-tryptophan from chorismate: step 2/5. In terms of biological role, catalyzes the transfer of the phosphoribosyl group of 5-phosphorylribose-1-pyrophosphate (PRPP) to anthranilate to yield N-(5'-phosphoribosyl)-anthranilate (PRA). The sequence is that of Anthranilate phosphoribosyltransferase from Leptospira borgpetersenii serovar Hardjo-bovis (strain JB197).